The following is a 214-amino-acid chain: Cell division protein DamX (214 aa).

2 stretches are compositionally biased toward polar residues: residues 1–14 (GSGTPTEAQTQPQQ) and 43–53 (QGMTGAASTLP). Residues 1–133 (GSGTPTEAQT…SVQSAPGSHY (133 aa)) form a disordered region. A helical membrane pass occupies residues 44–65 (GMTGAASTLPTAPATVMSGAAA). Composition is skewed to low complexity over residues 78–97 (QQHKTPAKTAAAKPTATQHK) and 110–131 (SSTAKAGAVASSGSSVQSAPGS). Positions 127-204 (SAPGSHYTLQ…VQAKKPWVRP (78 aa)) constitute an SPOR domain.

The protein belongs to the DamX family.

The protein resides in the cell inner membrane. Its function is as follows. Non-essential cell division protein. This Serratia marcescens protein is Cell division protein DamX.